The sequence spans 158 residues: 2-C-methyl-D-erythritol 2,4-cyclodiphosphate synthase (158 aa).

Positions 9 and 11 each coordinate a divalent metal cation. 4-CDP-2-C-methyl-D-erythritol 2-phosphate-binding positions include Asp-9–His-11 and His-35–Ser-36. Residue His-43 participates in a divalent metal cation binding. Residues Asp-57 to Gly-59, Phe-62 to Asp-66, Ala-101 to Ala-107, Thr-133 to Glu-136, Phe-140, and Arg-143 each bind 4-CDP-2-C-methyl-D-erythritol 2-phosphate.

Belongs to the IspF family. Homotrimer. It depends on a divalent metal cation as a cofactor.

The catalysed reaction is 4-CDP-2-C-methyl-D-erythritol 2-phosphate = 2-C-methyl-D-erythritol 2,4-cyclic diphosphate + CMP. Its pathway is isoprenoid biosynthesis; isopentenyl diphosphate biosynthesis via DXP pathway; isopentenyl diphosphate from 1-deoxy-D-xylulose 5-phosphate: step 4/6. Its function is as follows. Involved in the biosynthesis of isopentenyl diphosphate (IPP) and dimethylallyl diphosphate (DMAPP), two major building blocks of isoprenoid compounds. Catalyzes the conversion of 4-diphosphocytidyl-2-C-methyl-D-erythritol 2-phosphate (CDP-ME2P) to 2-C-methyl-D-erythritol 2,4-cyclodiphosphate (ME-CPP) with a corresponding release of cytidine 5-monophosphate (CMP). The protein is 2-C-methyl-D-erythritol 2,4-cyclodiphosphate synthase of Vibrio vulnificus (strain CMCP6).